We begin with the raw amino-acid sequence, 224 residues long: Probable Brix domain-containing ribosomal biogenesis protein (224 aa).

One can recognise a Brix domain in the interval 1-196 (MMLITTSHRP…IWIMEDGRRW (196 aa)).

In terms of biological role, probably involved in the biogenesis of the ribosome. The polypeptide is Probable Brix domain-containing ribosomal biogenesis protein (Pyrococcus abyssi (strain GE5 / Orsay)).